The following is a 161-amino-acid chain: Non-secretory ribonuclease (161 aa).

A signal peptide spans 1 to 27; the sequence is MVPKLFTSQICLLLLLGLMGVEGSLHA. The C-linked (Man) tryptophan glycan is linked to tryptophan 34. Catalysis depends on histidine 42, which acts as the Proton acceptor. The N-linked (GlcNAc...) asparagine glycan is linked to asparagine 44. Disulfide bonds link cysteine 50/cysteine 110, cysteine 64/cysteine 123, cysteine 82/cysteine 138, and cysteine 89/cysteine 98. 3'-nitrotyrosine is present on tyrosine 60. Residue 65–69 coordinates substrate; sequence KNQNT. N-linked (GlcNAc...) asparagine glycosylation is found at asparagine 86, asparagine 92, asparagine 111, and asparagine 119. The active-site Proton donor is histidine 156.

It belongs to the pancreatic ribonuclease family. Interacts with and forms a tight 1:1 complex with RNH1. Dimerization of two such complexes may occur.

The protein localises to the lysosome. It localises to the cytoplasmic granule. It carries out the reaction an [RNA] containing cytidine + H2O = an [RNA]-3'-cytidine-3'-phosphate + a 5'-hydroxy-ribonucleotide-3'-[RNA].. The enzyme catalyses an [RNA] containing uridine + H2O = an [RNA]-3'-uridine-3'-phosphate + a 5'-hydroxy-ribonucleotide-3'-[RNA].. This is a non-secretory ribonuclease. It is a pyrimidine specific nuclease with a slight preference for U. Cytotoxin and helminthotoxin. Possesses a wide variety of biological activities. In Nomascus leucogenys (Northern white-cheeked gibbon), this protein is Non-secretory ribonuclease (RNASE2).